Here is a 258-residue protein sequence, read N- to C-terminus: Acyl-[acyl-carrier-protein]--UDP-N-acetylglucosamine O-acyltransferase (258 aa).

The protein belongs to the transferase hexapeptide repeat family. LpxA subfamily. Homotrimer.

Its subcellular location is the cytoplasm. It catalyses the reaction a (3R)-hydroxyacyl-[ACP] + UDP-N-acetyl-alpha-D-glucosamine = a UDP-3-O-[(3R)-3-hydroxyacyl]-N-acetyl-alpha-D-glucosamine + holo-[ACP]. It functions in the pathway glycolipid biosynthesis; lipid IV(A) biosynthesis; lipid IV(A) from (3R)-3-hydroxytetradecanoyl-[acyl-carrier-protein] and UDP-N-acetyl-alpha-D-glucosamine: step 1/6. Involved in the biosynthesis of lipid A, a phosphorylated glycolipid that anchors the lipopolysaccharide to the outer membrane of the cell. The polypeptide is Acyl-[acyl-carrier-protein]--UDP-N-acetylglucosamine O-acyltransferase (Pseudomonas syringae pv. tomato (strain ATCC BAA-871 / DC3000)).